We begin with the raw amino-acid sequence, 37 residues long: uncharacterized protein (37 aa).

A signal peptide spans 1–23 (MLNFSLCLYPVFILNKLVLRTQS).

Belongs to the orthopoxviruses VACWR204.5 protein family.

This is an uncharacterized protein from Vaccinia virus (strain Western Reserve) (VACV).